Here is a 125-residue protein sequence, read N- to C-terminus: Large ribosomal subunit protein bL12 (125 aa).

This sequence belongs to the bacterial ribosomal protein bL12 family. Homodimer. Part of the ribosomal stalk of the 50S ribosomal subunit. Forms a multimeric L10(L12)X complex, where L10 forms an elongated spine to which 2 to 4 L12 dimers bind in a sequential fashion. Binds GTP-bound translation factors.

Its function is as follows. Forms part of the ribosomal stalk which helps the ribosome interact with GTP-bound translation factors. Is thus essential for accurate translation. The protein is Large ribosomal subunit protein bL12 of Thermoanaerobacter pseudethanolicus (strain ATCC 33223 / 39E) (Clostridium thermohydrosulfuricum).